The primary structure comprises 482 residues: tRNA sulfurtransferase (482 aa).

Residues 61–165 (LAIRDALTRI…DDRLLLIKGR (105 aa)) form the THUMP domain. ATP is bound by residues 183–184 (LI), lysine 265, glycine 287, and glutamine 296. Residues cysteine 344 and cysteine 456 are joined by a disulfide bond. In terms of domain architecture, Rhodanese spans 404–482 (FGANDVILDI…GFANVKVYRP (79 aa)). Residue cysteine 456 is the Cysteine persulfide intermediate of the active site.

The protein belongs to the ThiI family.

The protein resides in the cytoplasm. The enzyme catalyses [ThiI sulfur-carrier protein]-S-sulfanyl-L-cysteine + a uridine in tRNA + 2 reduced [2Fe-2S]-[ferredoxin] + ATP + H(+) = [ThiI sulfur-carrier protein]-L-cysteine + a 4-thiouridine in tRNA + 2 oxidized [2Fe-2S]-[ferredoxin] + AMP + diphosphate. The catalysed reaction is [ThiS sulfur-carrier protein]-C-terminal Gly-Gly-AMP + S-sulfanyl-L-cysteinyl-[cysteine desulfurase] + AH2 = [ThiS sulfur-carrier protein]-C-terminal-Gly-aminoethanethioate + L-cysteinyl-[cysteine desulfurase] + A + AMP + 2 H(+). The protein operates within cofactor biosynthesis; thiamine diphosphate biosynthesis. Functionally, catalyzes the ATP-dependent transfer of a sulfur to tRNA to produce 4-thiouridine in position 8 of tRNAs, which functions as a near-UV photosensor. Also catalyzes the transfer of sulfur to the sulfur carrier protein ThiS, forming ThiS-thiocarboxylate. This is a step in the synthesis of thiazole, in the thiamine biosynthesis pathway. The sulfur is donated as persulfide by IscS. This Salmonella typhi protein is tRNA sulfurtransferase.